The sequence spans 773 residues: Probable C-mannosyltransferase DPY19L2 (773 aa).

Residues 1-45 form a disordered region; it reads MVGPTRSKLREGSSDRPQSSCTGQARRRWSAATMEPQQERSAPQE. At 1–122 the chain is on the nuclear side; it reads MVGPTRSKLR…ALQMHRFSHR (122 aa). A helical membrane pass occupies residues 123–143; it reads TLFGLAIFVGILHWLHLITLF. The Perinuclear space portion of the chain corresponds to 144-209; sequence ENDHHFSHLS…INTVKRFHLY (66 aa). Residues 210–230 form a helical membrane-spanning segment; sequence PEVVIAYWYRTIIGIMNLFGI. At 231 to 256 the chain is on the nuclear side; the sequence is ETKTCWNVTRMEPLNEVQSCEGLGDP. A helical transmembrane segment spans residues 257 to 277; it reads ACFYIGVIFILNGLMMGLFFI. Over 278-311 the chain is Perinuclear space; sequence YSTYLSGSQLGGLITVACYFFNHGEATRVMWTPP. Residues 312–332 traverse the membrane as a helical segment; it reads LRESFSYPFLVLQMYILTIIL. Topologically, residues 333-358 are nuclear; that stretch reads RTSTVHKKHYMALCFSNVAFMLPWQF. A helical membrane pass occupies residues 359–379; sequence AQFILFTQIASLFPMYVVGYI. Residues 380–386 lie on the Perinuclear space side of the membrane; it reads EPSKFQK. Residues 387–407 traverse the membrane as a helical segment; sequence IIYVNMSSVALCFILMFGNSM. At 408–437 the chain is on the nuclear side; it reads YLSSYYSSCLLVTWAIMQKKSKIQKLGGTE. Residues 438–458 traverse the membrane as a helical segment; it reads LQFWLIQGCFWWCGTIILKFL. At 459-507 the chain is on the perinuclear space side; the sequence is TSKICGVSDHIRLSDLIAARILRYTDFDTLIYTCAPEFDFMEQATPLRY. A helical membrane pass occupies residues 508 to 528; sequence IKTLLLPLILVITYLIFKKIV. The Nuclear segment spans residues 529-548; it reads RDIMCVLYTNTYVRKQLLDN. A helical transmembrane segment spans residues 549-569; that stretch reads AELIFHTLQLLAFTGLAILIM. The Perinuclear space segment spans residues 570–590; it reads RLKLFLTPHMCIMASLICSQR. A helical membrane pass occupies residues 591-611; it reads LFGWLFCRIHFENVVFGILTM. The Nuclear segment spans residues 612–773; sequence MSIQGCANLH…NSMYRVLKIN (162 aa).

Belongs to the dpy-19 family. In terms of assembly, interacts with FAM209. Predominantly expressed in testis. Present in testis but absent from epididymal sperm (at protein level).

Its subcellular location is the nucleus inner membrane. Functionally, probable C-mannosyltransferase that mediates C-mannosylation of tryptophan residues on target proteins. In terms of biological role, required during spermatogenesis for sperm head elongation and acrosome formation. Also plays a role in acrosome attachment to the nuclear envelope. The sequence is that of Probable C-mannosyltransferase DPY19L2 (Dpy19l2) from Mus musculus (Mouse).